The sequence spans 306 residues: Putative S-adenosyl-L-methionine-dependent methyltransferase FRAAL5401 (306 aa).

S-adenosyl-L-methionine contacts are provided by residues Asp-126 and 155–156 (DL). Positions 201-225 (LSAPESRVATENRPNPKPGDEDRTK) are disordered.

It belongs to the UPF0677 family.

Functionally, exhibits S-adenosyl-L-methionine-dependent methyltransferase activity. This Frankia alni (strain DSM 45986 / CECT 9034 / ACN14a) protein is Putative S-adenosyl-L-methionine-dependent methyltransferase FRAAL5401.